Here is a 173-residue protein sequence, read N- to C-terminus: Alpha-crystallin A chain (173 aa).

M1 is modified (N-acetylmethionine). The tract at residues 1 to 63 (MDVTIQHPWF…RTVLDSGISE (63 aa)) is required for complex formation with BFSP1 and BFSP2. Deamidated glutamine; partial is present on Q6. S45 bears the Phosphoserine mark. Residue Q50 is modified to Deamidated glutamine; partial. The sHSP domain maps to 52–162 (LFRTVLDSGI…GHSERAIPVS (111 aa)). N6-acetyllysine is present on K70. Q90 carries the deamidated glutamine; partial modification. K99 carries the post-translational modification N6-acetyllysine. Position 100 (H100) interacts with Zn(2+). N101 carries the deamidated asparagine; partial modification. Zn(2+) is bound by residues E102 and H107. S122 carries the phosphoserine modification. N123 carries the post-translational modification Deamidated asparagine; partial. The segment at 145-173 (KVQSGLDAGHSERAIPVSREEKPSSAPSS) is disordered. Q147 carries the post-translational modification Deamidated glutamine; partial. Basic and acidic residues predominate over residues 153-167 (GHSERAIPVSREEKP). Residue H154 participates in Zn(2+) binding. An O-linked (GlcNAc) serine glycan is attached at S162.

The protein belongs to the small heat shock protein (HSP20) family. As to quaternary structure, heteromer composed of three CRYAA and one CRYAB subunits. Inter-subunit bridging via zinc ions enhances stability, which is crucial as there is no protein turn over in the lens. Can also form homodimers and homotetramers (dimers of dimers) which serve as the building blocks of homooligomers. Within homooligomers, the zinc-binding motif is created from residues of 3 different molecules. His-100 and Glu-102 from one molecule are ligands of the zinc ion, and His-107 and His-154 residues from additional molecules complete the site with tetrahedral coordination geometry. Part of a complex required for lens intermediate filament formation composed of BFSP1, BFSP2 and CRYAA. Post-translationally, acetylation at Lys-70 may increase chaperone activity. In terms of processing, undergoes age-dependent proteolytical cleavage at the C-terminus.

It is found in the cytoplasm. The protein localises to the nucleus. In terms of biological role, contributes to the transparency and refractive index of the lens. Acts as a chaperone, preventing aggregation of various proteins under a wide range of stress conditions. Required for the correct formation of lens intermediate filaments as part of a complex composed of BFSP1, BFSP2 and CRYAA. The sequence is that of Alpha-crystallin A chain (CRYAA) from Cavia porcellus (Guinea pig).